The following is a 288-amino-acid chain: Elongation factor Ts (288 aa).

The tract at residues 80 to 83 (TDFL) is involved in Mg(2+) ion dislocation from EF-Tu.

Belongs to the EF-Ts family.

Its subcellular location is the cytoplasm. Functionally, associates with the EF-Tu.GDP complex and induces the exchange of GDP to GTP. It remains bound to the aminoacyl-tRNA.EF-Tu.GTP complex up to the GTP hydrolysis stage on the ribosome. This Pseudomonas fluorescens (strain ATCC BAA-477 / NRRL B-23932 / Pf-5) protein is Elongation factor Ts.